The primary structure comprises 265 residues: Small ribosomal subunit protein uS2 (265 aa).

The interval 226–265 is disordered; the sequence is AAAPNSASVREEEFSAESADEGKGRRAPAKKGDKKADAAE. A compositionally biased stretch (basic and acidic residues) spans 245 to 265; that stretch reads DEGKGRRAPAKKGDKKADAAE.

The protein belongs to the universal ribosomal protein uS2 family.

This chain is Small ribosomal subunit protein uS2, found in Xanthomonas euvesicatoria pv. vesicatoria (strain 85-10) (Xanthomonas campestris pv. vesicatoria).